A 94-amino-acid polypeptide reads, in one-letter code: Co-chaperonin GroES (94 aa).

The protein belongs to the GroES chaperonin family. As to quaternary structure, heptamer of 7 subunits arranged in a ring. Interacts with the chaperonin GroEL.

It localises to the cytoplasm. In terms of biological role, together with the chaperonin GroEL, plays an essential role in assisting protein folding. The GroEL-GroES system forms a nano-cage that allows encapsulation of the non-native substrate proteins and provides a physical environment optimized to promote and accelerate protein folding. GroES binds to the apical surface of the GroEL ring, thereby capping the opening of the GroEL channel. This chain is Co-chaperonin GroES, found in Geobacillus sp. (strain WCH70).